The chain runs to 359 residues: Phospho-N-acetylmuramoyl-pentapeptide-transferase (359 aa).

Helical transmembrane passes span 3-23 (QILV…PALI), 55-75 (VAIV…GLAF), 80-100 (VSAS…VGFL), 117-137 (TAKT…VLQF), 156-176 (IATV…IVSA), 187-207 (LDGL…LITF), 231-251 (LTLI…WNAA), 255-275 (IFMG…LSVT), 280-300 (ILAV…VLQI), and 334-354 (FWLL…GEWL).

This sequence belongs to the glycosyltransferase 4 family. MraY subfamily. It depends on Mg(2+) as a cofactor.

The protein localises to the cell membrane. It carries out the reaction UDP-N-acetyl-alpha-D-muramoyl-L-alanyl-gamma-D-glutamyl-meso-2,6-diaminopimeloyl-D-alanyl-D-alanine + di-trans,octa-cis-undecaprenyl phosphate = di-trans,octa-cis-undecaprenyl diphospho-N-acetyl-alpha-D-muramoyl-L-alanyl-D-glutamyl-meso-2,6-diaminopimeloyl-D-alanyl-D-alanine + UMP. Its pathway is cell wall biogenesis; peptidoglycan biosynthesis. In terms of biological role, catalyzes the initial step of the lipid cycle reactions in the biosynthesis of the cell wall peptidoglycan: transfers peptidoglycan precursor phospho-MurNAc-pentapeptide from UDP-MurNAc-pentapeptide onto the lipid carrier undecaprenyl phosphate, yielding undecaprenyl-pyrophosphoryl-MurNAc-pentapeptide, known as lipid I. The polypeptide is Phospho-N-acetylmuramoyl-pentapeptide-transferase (Mycobacterium leprae (strain TN)).